We begin with the raw amino-acid sequence, 453 residues long: uncharacterized protein (453 aa).

[4Fe-4S] cluster is bound by residues Cys-74, Cys-80, Cys-83, and Cys-162. Gln-286, Tyr-315, Glu-336, and Asp-384 together coordinate S-adenosyl-L-methionine. Cys-411 serves as the catalytic Nucleophile.

Belongs to the class I-like SAM-binding methyltransferase superfamily. RNA M5U methyltransferase family.

This is an uncharacterized protein from Staphylococcus aureus (strain Mu50 / ATCC 700699).